The sequence spans 91 residues: MPKPNIHPQWYPEAKVYCDGEVIMTVGSTKPELHVDIWSGNHPFFTGTQKIVDAEGRVERFRRKYSGTKPQQTAKGKKAAPKSTPKTNKKG.

The disordered stretch occupies residues 62 to 91 (RRKYSGTKPQQTAKGKKAAPKSTPKTNKKG).

It belongs to the bacterial ribosomal protein bL31 family. Type A subfamily. Part of the 50S ribosomal subunit.

Functionally, binds the 23S rRNA. This is Large ribosomal subunit protein bL31 from Thermosynechococcus vestitus (strain NIES-2133 / IAM M-273 / BP-1).